The primary structure comprises 352 residues: Coproporphyrin III ferrochelatase (352 aa).

Residues S52 and Y121 each contribute to the Fe-coproporphyrin III site. Fe(2+) is bound by residues H181 and E269.

Belongs to the ferrochelatase family.

It localises to the cytoplasm. It carries out the reaction Fe-coproporphyrin III + 2 H(+) = coproporphyrin III + Fe(2+). The protein operates within porphyrin-containing compound metabolism; protoheme biosynthesis. Involved in coproporphyrin-dependent heme b biosynthesis. Catalyzes the insertion of ferrous iron into coproporphyrin III to form Fe-coproporphyrin III. The polypeptide is Coproporphyrin III ferrochelatase (Nocardia farcinica (strain IFM 10152)).